The sequence spans 157 residues: Thioredoxin-T (157 aa).

Residues 2 to 107 form the Thioredoxin domain; the sequence is VYPVRNKDDL…LAKLMEKHAG (106 aa). Cysteines 32 and 35 form a disulfide. The tract at residues 132–157 is disordered; the sequence is ESSESDNDNNNVNEVSAHDENAVLEH. The segment covering 147 to 157 has biased composition (basic and acidic residues); it reads SAHDENAVLEH.

This sequence belongs to the thioredoxin family. In terms of tissue distribution, testis specific. Not expressed in the embryo. Becomes progressively more strongly expressed during larval and pupal development. In testis, it is strongly expressed in young spermatocytes, and postmeiotic spermatid stages, then expression decreases at the nuclear elongation stage. Strongly expressed in the waste bag, in which material no longer needed for the mature sperm is eliminated. Not expressed in the stem cells and spermatogonial cells.

Its subcellular location is the nucleus. It localises to the chromosome. Its function is as follows. Probably participates in various redox reactions through the reversible oxidation of its active center dithiol to a disulfide and catalyzes dithiol-disulfide exchange reactions. Its tissue specificity suggests a regulatory role in the germline. The polypeptide is Thioredoxin-T (TrxT) (Drosophila melanogaster (Fruit fly)).